Reading from the N-terminus, the 27-residue chain is Phospholipase A2 2 (27 aa).

Positions 1-27 (FMKVIDPGTKWCGPGNKAADDTDNGKN) are disordered. Ca(2+)-binding residues include Trp-11, Gly-13, and Gly-15. The segment covering 18–27 (AADDTDNGKN) has biased composition (basic and acidic residues).

The protein belongs to the phospholipase A2 family. Ca(2+) serves as cofactor. As to expression, expressed by the venom gland.

Its subcellular location is the secreted. The enzyme catalyses a 1,2-diacyl-sn-glycero-3-phosphocholine + H2O = a 1-acyl-sn-glycero-3-phosphocholine + a fatty acid + H(+). PLA2 catalyzes the calcium-dependent hydrolysis of the 2-acyl groups in 3-sn-phosphoglycerides. The polypeptide is Phospholipase A2 2 (Opisthacanthus cayaporum (South American scorpion)).